Reading from the N-terminus, the 668-residue chain is Spartin (668 aa).

M1 is modified (N-acetylmethionine). Residues 16–94 (IKEAYKKAFV…LQNVRTRLEI (79 aa)) enclose the MIT domain. Residues 110 to 176 (VPKLYPEFPP…PSEAPPAYTP (67 aa)) form a disordered region. Positions 118 to 127 (PPKDMSEKSP) are enriched in basic and acidic residues. At S126 the chain carries Phosphoserine. A compositionally biased stretch (low complexity) spans 128–162 (EPQSLSSLPQHSEVNGSTSTASAESSSTPTTLSLP). Positions 190 to 380 (ESGEFSSVGE…QLDPSSKDVR (191 aa)) are ubiquitin-binding region (UBR) domain. Positions 193-200 (EFSSVGEN) match the LC3-interacting region (LIR); mediates interaction with MAP1LC3A AND MAP1LC3C motif. A disordered region spans residues 348–396 (FQIPGISGSASDQLKEASGTDVRQLDPSSKDVRQKGKRGKKTKGTSSEE). K362 participates in a covalent cross-link: Glycyl lysine isopeptide (Lys-Gly) (interchain with G-Cter in ubiquitin). In terms of domain architecture, Senescence spans 427 to 611 (ILSGASWVSW…YNIDNIGIKA (185 aa)). Residues 431–503 (ASWVSWGLVK…LVDGVCTVAN (73 aa)) are required for localization to lipid droplets. Position 470 is a phosphoserine (S470). The segment at 631-668 (IDNSKGENPGGGASANLKGEKDEQKEGPEKNGAKKKDK) is disordered. A compositionally biased stretch (basic and acidic residues) spans 648-668 (KGEKDEQKEGPEKNGAKKKDK).

As to quaternary structure, interacts with ITCH and WWP1. Interacts (via MIT domain) with IST1; leading to the recruitment of SPART to midbodies. Interacts with MAP1LC3A and MAP1LC3C. Post-translationally, ubiquitinated; ubiquitination does not require ITCH and WWP1.

It localises to the cytoplasm. The protein localises to the midbody. It is found in the lipid droplet. Lipophagy receptor that plays an important role in lipid droplet (LD) turnover in motor neurons. Localizes to LDs and interacts with components of the autophagy machinery, such as MAP1LC3A/C proteins to deliver LDs to autophagosomes for degradation via lipophagy. Lipid transfer protein required for lipid droplet degradation, including by lipophagy. Can bind and transfer all lipid species found in lipid droplets, from phospholipids to triglycerides and sterol esters but the direction of lipid transfer by spartin and its cargos are unknown. May be implicated in endosomal trafficking, or microtubule dynamics, or both. Participates in cytokinesis. In Bos taurus (Bovine), this protein is Spartin.